The chain runs to 312 residues: HPr kinase/phosphorylase (312 aa).

Residues H139 and K160 contribute to the active site. G154 to S161 contacts ATP. S161 is a Mg(2+) binding site. The active-site Proton acceptor; for phosphorylation activity. Proton donor; for dephosphorylation activity is D178. An important for the catalytic mechanism of both phosphorylation and dephosphorylation region spans residues L202 to N211. E203 lines the Mg(2+) pocket. The active site involves R244. Positions P265–R270 are important for the catalytic mechanism of dephosphorylation.

The protein belongs to the HPrK/P family. Homohexamer. Requires Mg(2+) as cofactor.

It carries out the reaction [HPr protein]-L-serine + ATP = [HPr protein]-O-phospho-L-serine + ADP + H(+). The enzyme catalyses [HPr protein]-O-phospho-L-serine + phosphate + H(+) = [HPr protein]-L-serine + diphosphate. Functionally, catalyzes the ATP- as well as the pyrophosphate-dependent phosphorylation of a specific serine residue in HPr, a phosphocarrier protein of the phosphoenolpyruvate-dependent sugar phosphotransferase system (PTS). HprK/P also catalyzes the pyrophosphate-producing, inorganic phosphate-dependent dephosphorylation (phosphorolysis) of seryl-phosphorylated HPr (P-Ser-HPr). The two antagonistic activities of HprK/P are regulated by several intracellular metabolites, which change their concentration in response to the absence or presence of rapidly metabolisable carbon sources (glucose, fructose, etc.) in the growth medium. Therefore, by controlling the phosphorylation state of HPr, HPrK/P is a sensor enzyme that plays a major role in the regulation of carbon metabolism and sugar transport: it mediates carbon catabolite repression (CCR), and regulates PTS-catalyzed carbohydrate uptake and inducer exclusion. This Listeria innocua serovar 6a (strain ATCC BAA-680 / CLIP 11262) protein is HPr kinase/phosphorylase.